Reading from the N-terminus, the 396-residue chain is Tryptophan synthase beta chain (396 aa).

Lys88 is modified (N6-(pyridoxal phosphate)lysine).

Belongs to the TrpB family. As to quaternary structure, tetramer of two alpha and two beta chains. Pyridoxal 5'-phosphate serves as cofactor.

The catalysed reaction is (1S,2R)-1-C-(indol-3-yl)glycerol 3-phosphate + L-serine = D-glyceraldehyde 3-phosphate + L-tryptophan + H2O. Its pathway is amino-acid biosynthesis; L-tryptophan biosynthesis; L-tryptophan from chorismate: step 5/5. Its function is as follows. The beta subunit is responsible for the synthesis of L-tryptophan from indole and L-serine. In Shewanella putrefaciens (strain CN-32 / ATCC BAA-453), this protein is Tryptophan synthase beta chain.